Here is a 154-residue protein sequence, read N- to C-terminus: Anaerobic ribonucleoside-triphosphate reductase-activating protein (154 aa).

Cysteine 26, cysteine 30, and cysteine 33 together coordinate [4Fe-4S] cluster. S-adenosyl-L-methionine contacts are provided by residues 32–34 (GCY) and glycine 74.

This sequence belongs to the organic radical-activating enzymes family. As to quaternary structure, forms a tetramer composed of two NrdD and two NrdG subunits. Requires [4Fe-4S] cluster as cofactor.

It is found in the cytoplasm. It carries out the reaction glycyl-[protein] + reduced [flavodoxin] + S-adenosyl-L-methionine = glycin-2-yl radical-[protein] + semiquinone [flavodoxin] + 5'-deoxyadenosine + L-methionine + H(+). Functionally, activation of anaerobic ribonucleoside-triphosphate reductase under anaerobic conditions by generation of an organic free radical, using S-adenosylmethionine and reduced flavodoxin as cosubstrates to produce 5'-deoxy-adenosine. In Salmonella typhi, this protein is Anaerobic ribonucleoside-triphosphate reductase-activating protein (nrdG).